The sequence spans 448 residues: Homogentisate 1,2-dioxygenase (448 aa).

Residues 1-26 are disordered; it reads MNMLAPAAKNAFTPASPDRPAYQSGF. H302 acts as the Proton acceptor in catalysis. Positions 345 and 351 each coordinate Fe cation. Positions 360 and 381 each coordinate homogentisate. H381 contacts Fe cation.

It belongs to the homogentisate dioxygenase family. As to quaternary structure, hexamer; dimer of trimers. The cofactor is Fe cation.

It catalyses the reaction homogentisate + O2 = 4-maleylacetoacetate + H(+). It participates in amino-acid degradation; L-phenylalanine degradation; acetoacetate and fumarate from L-phenylalanine: step 4/6. Involved in the catabolism of homogentisate (2,5-dihydroxyphenylacetate or 2,5-OH-PhAc), a central intermediate in the degradation of phenylalanine and tyrosine. Catalyzes the oxidative ring cleavage of the aromatic ring of homogentisate to yield maleylacetoacetate. The sequence is that of Homogentisate 1,2-dioxygenase from Ralstonia nicotianae (strain ATCC BAA-1114 / GMI1000) (Ralstonia solanacearum).